Consider the following 298-residue polypeptide: Mitochondrial 2-oxodicarboxylate carrier (298 aa).

Solcar repeat units lie at residues 10–99 (HETC…YKKF), 106–195 (SPGL…VKDN), and 204–293 (LEFL…TYAW). The next 6 membrane-spanning stretches (helical) occupy residues 16–36 (VAAG…LDVV), 69–88 (FGFY…KRAV), 112–132 (PIAG…FEVV), 166–186 (GLNK…MTYF), 204–224 (LEFL…SVFN), and 276–296 (LGPG…WLQE).

The protein belongs to the mitochondrial carrier (TC 2.A.29) family. As to expression, widely expressed.

The protein resides in the mitochondrion inner membrane. The enzyme catalyses 2-oxoadipate(in) + 2-oxoglutarate(out) = 2-oxoadipate(out) + 2-oxoglutarate(in). The catalysed reaction is hexanedioate(in) + 2-oxoglutarate(out) = hexanedioate(out) + 2-oxoglutarate(in). It catalyses the reaction L-2-aminoadipate(in) + 2-oxoglutarate(out) = L-2-aminoadipate(out) + 2-oxoglutarate(in). It carries out the reaction glutarate(in) + 2-oxoglutarate(out) = glutarate(out) + 2-oxoglutarate(in). The enzyme catalyses 2-oxoheptanedioate(in) + 2-oxoglutarate(out) = 2-oxoheptanedioate(out) + 2-oxoglutarate(in). The catalysed reaction is heptanedioate(in) + 2-oxoglutarate(out) = heptanedioate(out) + 2-oxoglutarate(in). It catalyses the reaction citrate(in) + 2-oxoglutarate(out) = citrate(out) + 2-oxoglutarate(in). Its function is as follows. Transports dicarboxylates across the inner membranes of mitochondria by a counter-exchange mechanism. Can transport 2-oxoadipate (2-oxohexanedioate), 2-oxoglutarate, adipate (hexanedioate), glutarate, and to a lesser extent, pimelate (heptanedioate), 2-oxopimelate (2-oxoheptanedioate), 2-aminoadipate (2-aminohexanedioate), oxaloacetate, and citrate. Plays a central role in catabolism of lysine, hydroxylysine, and tryptophan, by transporting common metabolite intermediates (such as 2-oxoadipate) into the mitochondria, where it is converted into acetyl-CoA and can enter the citric acid (TCA) cycle. The chain is Mitochondrial 2-oxodicarboxylate carrier (Slc25a21) from Rattus norvegicus (Rat).